A 269-amino-acid chain; its full sequence is Prespore protein Dd31 (269 aa).

The span at 1 to 17 (MEHNNNPGTPQMSSEFP) shows a compositional bias: polar residues. Residues 1–35 (MEHNNNPGTPQMSSEFPASTTQTSSSAAAYDNSSH) form a disordered region. Residues 18 to 29 (ASTTQTSSSAAA) show a composition bias toward low complexity. The next 4 membrane-spanning stretches (helical) occupy residues 111–131 (FGIFVFLWEAAALVYNWVVSI), 139–159 (VDNFFLALFYMIVGVPTLYFL), 177–197 (YAYLMALLGVVLFNIIFFVGF), and 225–245 (VSLFFWFVGVFLTIALFIMYL).

The protein belongs to the SCAMP family.

The protein resides in the membrane. It is found in the spore coat. This is Prespore protein Dd31 (spiA) from Dictyostelium discoideum (Social amoeba).